Here is a 273-residue protein sequence, read N- to C-terminus: ABC transporter glutamine-binding protein GlnH (273 aa).

The signal sequence occupies residues 1–20 (MKKIFSLALISLFAVILLAA). Cys-21 carries N-palmitoyl cysteine lipidation. Cys-21 is lipidated: S-diacylglycerol cysteine.

Belongs to the bacterial solute-binding protein 3 family. The complex is composed of two ATP-binding proteins (GlnQ), two transmembrane proteins (GlnM and GlnP) and a solute-binding protein (GlnH).

The protein resides in the cell membrane. Part of the ABC transporter complex GlnHMPQ involved in glutamine transport. The chain is ABC transporter glutamine-binding protein GlnH (glnH) from Bacillus subtilis (strain 168).